A 157-amino-acid chain; its full sequence is Probable succinate transporter subunit YjjB (157 aa).

4 consecutive transmembrane segments (helical) span residues 8 to 28, 57 to 77, 87 to 107, and 129 to 149; these read FALAQDMILAAIPAVGFAMVF, LNIEWSTFMASMLVGTIGIQW, VFTVAAVIPMFPGISAYTAMI, and FLTASSIVGALSIGLSIPGLW.

The protein belongs to the ThrE exporter (TC 2.A.79) family. The transporter is composed of YjjB and YjjP.

Its subcellular location is the cell inner membrane. Involved in succinate export with YjjP. Both proteins are required for export. In Shigella boydii serotype 4 (strain Sb227), this protein is Probable succinate transporter subunit YjjB.